The primary structure comprises 257 residues: Probable pectate lyase G (257 aa).

An N-terminal signal peptide occupies residues Met1–Ala24.

The protein belongs to the polysaccharide lyase 3 family. Ca(2+) is required as a cofactor.

It is found in the secreted. The enzyme catalyses Eliminative cleavage of (1-&gt;4)-alpha-D-galacturonan to give oligosaccharides with 4-deoxy-alpha-D-galact-4-enuronosyl groups at their non-reducing ends.. Functionally, pectinolytic enzyme consist of four classes of enzymes: pectin lyase, polygalacturonase, pectin methylesterase and rhamnogalacturonase. Among pectinolytic enzymes, pectin lyase is the most important in depolymerization of pectin, since it cleaves internal glycosidic bonds of highly methylated pectins. Favors pectate, the anion, over pectin, the methyl ester. In Emericella nidulans (strain FGSC A4 / ATCC 38163 / CBS 112.46 / NRRL 194 / M139) (Aspergillus nidulans), this protein is Probable pectate lyase G (plyG).